Reading from the N-terminus, the 423-residue chain is Maltooligosaccharide ABC transporter solute-binding lipoprotein (423 aa).

The N-terminal stretch at 1-24 is a signal peptide; sequence MSSKFMKSTAVLGTVTLASLLLVA. Cysteine 25 is lipidated: N-palmitoyl cysteine. Cysteine 25 carries S-diacylglycerol cysteine lipidation. Substrate is bound by residues tyrosine 52, aspartate 77, aspartate 83, 103–104, glutamate 148, aspartate 193, asparagine 196, 251–254, tryptophan 274, and lysine 307; these read DR and EGAG.

It belongs to the bacterial solute-binding protein 1 family.

It is found in the cell membrane. Its function is as follows. Part of an ABC transporter complex involved in the uptake of maltodextrins. Binds glycogen-derived linear maltooligosaccharides increasing in size from maltotriose to maltooctaose with the highest affinity for maltotriose. Has a very weak affinity for maltose. Has also a very low affinity for maltotetraitol, indicating that the binding is selective for maltooligosaccharides with an intact reducing end. The sequence is that of Maltooligosaccharide ABC transporter solute-binding lipoprotein (malX) from Streptococcus pneumoniae (strain ATCC BAA-255 / R6).